We begin with the raw amino-acid sequence, 388 residues long: Ribonuclease D (388 aa).

A 3'-5' exonuclease domain is found at 7–173 (ITDSKTLAQF…QIFPKMLEEL (167 aa)). In terms of domain architecture, HRDC spans 212 to 293 (KADVLGRLKA…ASHAPLAKEE (82 aa)).

It belongs to the RNase D family. The cofactor is a divalent metal cation.

The protein resides in the cytoplasm. It carries out the reaction Exonucleolytic cleavage that removes extra residues from the 3'-terminus of tRNA to produce 5'-mononucleotides.. In terms of biological role, exonuclease involved in the 3' processing of various precursor tRNAs. Initiates hydrolysis at the 3'-terminus of an RNA molecule and releases 5'-mononucleotides. This chain is Ribonuclease D, found in Sphingobium indicum (strain DSM 16413 / CCM 7287 / MTCC 6362 / UT26 / NBRC 101211 / UT26S) (Sphingobium japonicum).